Here is a 315-residue protein sequence, read N- to C-terminus: Putative pyruvate, phosphate dikinase regulatory protein (315 aa).

The segment at 1–32 (MGPFGARASPEAGQVVKQPLTDDPQESLAQGE) is disordered. Residue 189-196 (GVSRTSKT) coordinates ADP.

This sequence belongs to the pyruvate, phosphate/water dikinase regulatory protein family. PDRP subfamily.

It catalyses the reaction N(tele)-phospho-L-histidyl/L-threonyl-[pyruvate, phosphate dikinase] + ADP = N(tele)-phospho-L-histidyl/O-phospho-L-threonyl-[pyruvate, phosphate dikinase] + AMP + H(+). The enzyme catalyses N(tele)-phospho-L-histidyl/O-phospho-L-threonyl-[pyruvate, phosphate dikinase] + phosphate + H(+) = N(tele)-phospho-L-histidyl/L-threonyl-[pyruvate, phosphate dikinase] + diphosphate. Its function is as follows. Bifunctional serine/threonine kinase and phosphorylase involved in the regulation of the pyruvate, phosphate dikinase (PPDK) by catalyzing its phosphorylation/dephosphorylation. This chain is Putative pyruvate, phosphate dikinase regulatory protein, found in Caulobacter vibrioides (strain ATCC 19089 / CIP 103742 / CB 15) (Caulobacter crescentus).